The primary structure comprises 139 residues: Mitochondrial intermembrane space import and assembly protein 40-A (139 aa).

3 cysteine pairs are disulfide-bonded: Cys53/Cys55, Cys64/Cys97, and Cys74/Cys87. The CHCH domain maps to 61–105; that stretch reads SGPCGEQFKSAFSCFHYSQEEIKGSDCLDQFRGMQECMQKYPDLY. Short sequence motifs (cx9C motif) lie at residues 64–74 and 87–97; these read CGEQFKSAFSC and CLDQFRGMQEC. The tract at residues 103–139 is disordered; sequence DLYPQEDDEEEAEKEKQNKEAEPSVTQSSDTKEESSS. Residues 115-124 are compositionally biased toward basic and acidic residues; sequence EKEKQNKEAE.

Monomer. Can form homooligomers.

It is found in the mitochondrion intermembrane space. Its function is as follows. Central component of a redox-sensitive mitochondrial intermembrane space import machinery which is required for the biogenesis of respiratory chain complexes. Functions as chaperone and catalyzes the formation of disulfide bonds in substrate proteins, such as COX17 or MICU1. Required for the import and folding of small cysteine-containing proteins (small Tim) in the mitochondrial intermembrane space (IMS). Precursor proteins to be imported into the IMS are translocated in their reduced form into the mitochondria. The protein is Mitochondrial intermembrane space import and assembly protein 40-A (chchd4-a) of Xenopus laevis (African clawed frog).